Consider the following 319-residue polypeptide: Polyprenyl transferase macG (319 aa).

A run of 9 helical transmembrane segments spans residues 28–45 (AWLCWYPAIWGACVAAGM), 48–68 (VSLELAPFLRLLFGIWASVTA), 106–126 (AVVAFICWLPVTLAITWGTLG), 127–147 (PAVMAGFIPVWVLSTIYPFMK), 152–172 (FPQVVLGAIIGGAVFPGWVGI), 182–202 (ALPLFFATASWVVYFDVFYAT), 224–244 (VQILLAVLGALQVLLFAVTAL), 249–269 (SLIFWVLGLGVWMVNVPWHIL), and 289–309 (LGLYLTGVSLLELFVVRVYDI).

It belongs to the UbiA prenyltransferase family. Mg(2+) serves as cofactor.

It localises to the membrane. The protein operates within secondary metabolite biosynthesis; terpenoid biosynthesis. Polyprenyl transferase; part of the gene cluster that mediates the biosynthesis of macrophorins, isoprenoid epoxycyclohexenones containing cyclized drimane moieties. The first step of the pathway is the synthesis of 6-methylsalicylic acid (6-MSA) by the polyketide synthase macA. 6-MSA is then converted to m-cresol by the decarboxylase macB. The cytochrome P450 monooxygenase macC then catalyzes the oxidation of m-cresol to toluquinol. Epoxidation of toluquinol is then performed by the short chain dehydrogenase macD, with the help of macE, and a further prenylation by macG leads to 7-deacetoxyyanuthone A. The next step is the hydroxylation of C-22 of 7-deacetoxyyanuthone A by the cytochrome P450 monooxygenase macH to yield 22-deacetylyanuthone A. O-Mevalon transferase macI then attaches mevalon to the hydroxyl group of 22-deacetylyanuthone A to produce yanuthone E. The terpene cyclase macJ catalyzes the cyclization of 22-deacetylyanuthone A to macrophorin A. MacJ is also able to catalyze cyclization of yanuthone E and 7-deacetoxyyanuthone A to their corresponding macrophorins. The macJ products can be further modified by macH and macJ, as well as by the FAD-dependent monooxygenase macF, to produce additional macrophorins, including 4'-oxomacrophorin A, 4'-oxomacrophorin D and 4'-oxomacrophorin E. The protein is Polyprenyl transferase macG of Penicillium terrestre.